The following is a 162-amino-acid chain: MERFIENAMYASRWLLAPIYFGLSLGLLALALKFFQEVIHLLPSVFSMAESELILVLLSLIDMALVGGLLVMVMISGYENFVSQLDIDDNKEKLNWLGTMDSSSLKMKVAASIVAISSIHLLRIFMDAKNVDPQHLMWYVIIHMTFVVSAFAMGYLDKVTKH.

3 consecutive transmembrane segments (helical) span residues 15–35 (LLAP…LKFF), 53–73 (LILV…LVMV), and 136–156 (LMWY…MGYL).

The protein belongs to the UPF0114 family.

It is found in the cell membrane. The polypeptide is UPF0114 protein PFLU_5318 (Pseudomonas fluorescens (strain SBW25)).